Reading from the N-terminus, the 97-residue chain is DNA/RNA-binding protein Alba 1 (97 aa).

Serine 2 bears the N-acetylserine; by ard1 acetylase mark. RNA is bound by residues lysine 16, lysine 17, and tyrosine 22. N6,N6,N6-trimethyllysine; alternate is present on lysine 16. Lysine 16 bears the N6,N6-dimethyllysine; alternate mark. At lysine 16 the chain carries N6-acetyllysine; alternate. Lysine 16 is subject to N6-methyllysine; alternate. Asparagine 31 carries the post-translational modification Deamidated asparagine; partial. Deamidated glutamine; partial is present on glutamine 32. Position 40 is an N6-methyllysine; partial (lysine 40). Positions 42 and 44 each coordinate RNA. Residue lysine 48 is modified to N6-acetyllysine; partial. The residue at position 51 (aspartate 51) is an Aspartate methyl ester; partial. Residue asparagine 58 is modified to Deamidated asparagine; partial. The residue at position 64 (lysine 64) is an N6-acetyllysine; alternate; partial. Lysine 64 is modified (N6-methyllysine; alternate; partial). At lysine 68 the chain carries N6-acetyllysine; partial. Glutamine 75 carries the post-translational modification N5-methylglutamine; partial. At aspartate 81 the chain carries Aspartate methyl ester; partial. The residue at position 97 (lysine 97) is an N6-methyllysine; partial.

This sequence belongs to the histone-like Alba family. As to quaternary structure, forms homodimers and higher order oligomers, e.g. homotetramers. Acetylated. Acetylation at Lys-16 by the Pat acetylase decreases DNA-binding affinity. Deacetylation at Lys-16 by the CobB deacetylase increases DNA-binding affinity. Acetylation at Ser-2 is involved in the regulation of the turnover of the protein.

Its subcellular location is the cytoplasm. It is found in the chromosome. Its function is as follows. Binds double-stranded DNA tightly but without sequence specificity. Involved in DNA compaction. Possesses DNA endonuclease activity. Prevents transcription after DNA binding. Binds single-stranded DNA and RNA in vitro. Binds rRNA and mRNA in vivo. May play a role in maintaining the structural and functional stability of RNA, and, perhaps, ribosomes. Binds double-stranded RNA (dsRNA) and exhibits RNA chaperone activity. Required for normal growth. The polypeptide is DNA/RNA-binding protein Alba 1 (Saccharolobus islandicus (strain REY15A) (Sulfolobus islandicus)).